We begin with the raw amino-acid sequence, 113 residues long: Putative pterin-4-alpha-carbinolamine dehydratase (113 aa).

Belongs to the pterin-4-alpha-carbinolamine dehydratase family.

It catalyses the reaction (4aS,6R)-4a-hydroxy-L-erythro-5,6,7,8-tetrahydrobiopterin = (6R)-L-erythro-6,7-dihydrobiopterin + H2O. This is Putative pterin-4-alpha-carbinolamine dehydratase from Nitrosospira multiformis (strain ATCC 25196 / NCIMB 11849 / C 71).